The chain runs to 182 residues: Orotate phosphoribosyltransferase (182 aa).

Residues arginine 93, lysine 94, lysine 97, and glutamate 119 to serine 127 each bind 5-phospho-alpha-D-ribose 1-diphosphate. 2 residues coordinate orotate: threonine 123 and arginine 151.

It belongs to the purine/pyrimidine phosphoribosyltransferase family. PyrE subfamily. As to quaternary structure, homodimer. Mg(2+) is required as a cofactor.

The catalysed reaction is orotidine 5'-phosphate + diphosphate = orotate + 5-phospho-alpha-D-ribose 1-diphosphate. The protein operates within pyrimidine metabolism; UMP biosynthesis via de novo pathway; UMP from orotate: step 1/2. In terms of biological role, catalyzes the transfer of a ribosyl phosphate group from 5-phosphoribose 1-diphosphate to orotate, leading to the formation of orotidine monophosphate (OMP). This is Orotate phosphoribosyltransferase from Haloquadratum walsbyi (strain DSM 16790 / HBSQ001).